A 341-amino-acid polypeptide reads, in one-letter code: Ketol-acid reductoisomerase (NADP(+)) (341 aa).

In terms of domain architecture, KARI N-terminal Rossmann spans 1–182 (MATIYYDKDA…GCTRAGVLET (182 aa)). NADP(+) is bound by residues 25 to 28 (YGSQ), S51, S53, and 83 to 86 (DQTQ). The active site involves H108. G134 provides a ligand contact to NADP(+). Positions 183–328 (TFKEETETDL…KRLRDMMSWI (146 aa)) constitute a KARI C-terminal knotted domain. Mg(2+)-binding residues include D191, E195, E227, and E231. S252 contacts substrate.

Belongs to the ketol-acid reductoisomerase family. Mg(2+) is required as a cofactor.

It catalyses the reaction (2R)-2,3-dihydroxy-3-methylbutanoate + NADP(+) = (2S)-2-acetolactate + NADPH + H(+). It carries out the reaction (2R,3R)-2,3-dihydroxy-3-methylpentanoate + NADP(+) = (S)-2-ethyl-2-hydroxy-3-oxobutanoate + NADPH + H(+). The protein operates within amino-acid biosynthesis; L-isoleucine biosynthesis; L-isoleucine from 2-oxobutanoate: step 2/4. Its pathway is amino-acid biosynthesis; L-valine biosynthesis; L-valine from pyruvate: step 2/4. Involved in the biosynthesis of branched-chain amino acids (BCAA). Catalyzes an alkyl-migration followed by a ketol-acid reduction of (S)-2-acetolactate (S2AL) to yield (R)-2,3-dihydroxy-isovalerate. In the isomerase reaction, S2AL is rearranged via a Mg-dependent methyl migration to produce 3-hydroxy-3-methyl-2-ketobutyrate (HMKB). In the reductase reaction, this 2-ketoacid undergoes a metal-dependent reduction by NADPH to yield (R)-2,3-dihydroxy-isovalerate. This is Ketol-acid reductoisomerase (NADP(+)) from Anaeromyxobacter dehalogenans (strain 2CP-C).